The sequence spans 223 residues: N-terminal Xaa-Pro-Lys N-methyltransferase 1 (223 aa).

S-adenosyl-L-methionine contacts are provided by residues Gly-69, Arg-74, 91–93 (DVT), 119–120 (LQ), and Gln-135.

This sequence belongs to the methyltransferase superfamily. NTM1 family.

The protein localises to the nucleus. The enzyme catalyses N-terminal L-alanyl-L-prolyl-L-lysyl-[protein] + 3 S-adenosyl-L-methionine = N-terminal N,N,N-trimethyl-L-alanyl-L-prolyl-L-lysyl-[protein] + 3 S-adenosyl-L-homocysteine + 3 H(+). The catalysed reaction is N-terminal L-seryl-L-prolyl-L-lysyl-[protein] + 3 S-adenosyl-L-methionine = N-terminal N,N,N-trimethyl-L-seryl-L-prolyl-L-lysyl-[protein] + 3 S-adenosyl-L-homocysteine + 3 H(+). It carries out the reaction N-terminal L-prolyl-L-prolyl-L-lysyl-[protein] + 2 S-adenosyl-L-methionine = N-terminal N,N-dimethyl-L-prolyl-L-prolyl-L-lysyl-[protein] + 2 S-adenosyl-L-homocysteine + 2 H(+). In terms of biological role, distributive alpha-N-methyltransferase that methylates the N-terminus of target proteins containing the N-terminal motif [Ala/Gly/Pro/Ser]-Pro-Lys when the initiator Met is cleaved. Specifically catalyzes mono-, di- or tri-methylation of the exposed alpha-amino group of the Ala, Gly or Ser residue in the [Ala/Gly/Ser]-Pro-Lys motif and mono- or di-methylation of Pro in the Pro-Pro-Lys motif. Required during mitosis for normal bipolar spindle formation and chromosome segregation via its action on target proteins. The sequence is that of N-terminal Xaa-Pro-Lys N-methyltransferase 1 (ntmt1) from Danio rerio (Zebrafish).